Here is a 235-residue protein sequence, read N- to C-terminus: Lipoprotein-releasing system ATP-binding protein LolD 1 (235 aa).

An ABC transporter domain is found at 5–234 (FEARGITKSY…DGRLQLCTPL (230 aa)). 42 to 49 (GASGSGKT) contributes to the ATP binding site.

Belongs to the ABC transporter superfamily. Lipoprotein translocase (TC 3.A.1.125) family. The complex is composed of two ATP-binding proteins (LolD) and two transmembrane proteins (LolC and LolE).

It localises to the cell inner membrane. Functionally, part of the ABC transporter complex LolCDE involved in the translocation of mature outer membrane-directed lipoproteins, from the inner membrane to the periplasmic chaperone, LolA. Responsible for the formation of the LolA-lipoprotein complex in an ATP-dependent manner. The protein is Lipoprotein-releasing system ATP-binding protein LolD 1 of Chlorobium luteolum (strain DSM 273 / BCRC 81028 / 2530) (Pelodictyon luteolum).